The sequence spans 266 residues: Protein YABBY 5 (266 aa).

Residues 1-22 form a disordered region; that stretch reads MMSSAPETFSLDHLSQHQQQQP. A C4-type zinc finger spans residues 36 to 63; that stretch reads CNFCDTILAVGVPCSSLFKTVTVRCGHC. A compositionally biased stretch (low complexity) spans 119–141; the sequence is ASPNVSSITSSNSSCANNAPATS. The tract at residues 119–174 is disordered; the sequence is ASPNVSSITSSNSSCANNAPATSMASAANKATQREPQQPKNAPSANRTSEKRQRVP. The span at 142–165 shows a compositional bias: polar residues; sequence MASAANKATQREPQQPKNAPSANR.

It belongs to the YABBY family.

It is found in the nucleus. Its function is as follows. May be involved in leaf cell growth and differentiation, rather than abaxial cell fate determination. The sequence is that of Protein YABBY 5 (YAB5) from Oryza sativa subsp. indica (Rice).